We begin with the raw amino-acid sequence, 380 residues long: Putative RNA ligase (380 aa).

Functionally, putative RNA ligase. Is able to catalyze the adenylation reaction of ssDNA 3'-terminal phosphate (ssDNA 3'p) to 3'-adenylated DNA (ssDNA 3'pp5'A). The chain is Putative RNA ligase from Thermovibrio ammonificans (strain DSM 15698 / JCM 12110 / HB-1).